The chain runs to 571 residues: Glutamate--tRNA ligase (571 aa).

Positions 38–48 match the 'HIGH' region motif; it reads PSPTGFMHIGG. The 'KMSKS' region signature appears at 316–320; sequence KLSKR. Residue Lys-319 participates in ATP binding.

It belongs to the class-I aminoacyl-tRNA synthetase family. Glutamate--tRNA ligase type 1 subfamily. As to quaternary structure, monomer.

It localises to the cytoplasm. The catalysed reaction is tRNA(Glu) + L-glutamate + ATP = L-glutamyl-tRNA(Glu) + AMP + diphosphate. In terms of biological role, catalyzes the attachment of glutamate to tRNA(Glu) in a two-step reaction: glutamate is first activated by ATP to form Glu-AMP and then transferred to the acceptor end of tRNA(Glu). The sequence is that of Glutamate--tRNA ligase from Sorangium cellulosum (strain So ce56) (Polyangium cellulosum (strain So ce56)).